We begin with the raw amino-acid sequence, 226 residues long: Ribonuclease HII (226 aa).

An RNase H type-2 domain is found at 29 to 220 (GPVAGVDEAG…VAALLHRVDN (192 aa)). Positions 35, 36, and 129 each coordinate a divalent metal cation.

The protein belongs to the RNase HII family. Requires Mn(2+) as cofactor. The cofactor is Mg(2+).

It is found in the cytoplasm. The enzyme catalyses Endonucleolytic cleavage to 5'-phosphomonoester.. In terms of biological role, endonuclease that specifically degrades the RNA of RNA-DNA hybrids. This chain is Ribonuclease HII, found in Rhodococcus opacus (strain B4).